A 31-amino-acid polypeptide reads, in one-letter code: MINTNMKYWSWMGAFSLSMLFWAELLWIITH.

A helical transmembrane segment spans residues 9–29 (WSWMGAFSLSMLFWAELLWII).

Its subcellular location is the cell inner membrane. This is Protein YmiC from Escherichia coli (strain K12).